A 377-amino-acid chain; its full sequence is Chaperone protein DnaJ (377 aa).

The J domain maps to 5–70 (DYYEVLGVGR…NKKAAYDQFG (66 aa)). The CR-type zinc-finger motif lies at 133-211 (GLTKELRIPT…CHGDGRVEKT (79 aa)). Zn(2+) is bound by residues C146, C149, C163, C166, C185, C188, C199, and C202. CXXCXGXG motif repeat units follow at residues 146–153 (CDVCDGSG), 163–170 (CGTCHGQG), 185–192 (CPTCHGRG), and 199–206 (CSKCHGDG).

It belongs to the DnaJ family. As to quaternary structure, homodimer. Zn(2+) is required as a cofactor.

It localises to the cytoplasm. Its function is as follows. Participates actively in the response to hyperosmotic and heat shock by preventing the aggregation of stress-denatured proteins and by disaggregating proteins, also in an autonomous, DnaK-independent fashion. Unfolded proteins bind initially to DnaJ; upon interaction with the DnaJ-bound protein, DnaK hydrolyzes its bound ATP, resulting in the formation of a stable complex. GrpE releases ADP from DnaK; ATP binding to DnaK triggers the release of the substrate protein, thus completing the reaction cycle. Several rounds of ATP-dependent interactions between DnaJ, DnaK and GrpE are required for fully efficient folding. Also involved, together with DnaK and GrpE, in the DNA replication of plasmids through activation of initiation proteins. The protein is Chaperone protein DnaJ of Shewanella sp. (strain ANA-3).